Here is a 534-residue protein sequence, read N- to C-terminus: MLGPATFLPLTAALLLLIPGGRAQFPRQCVTPEALRSGQCCPGLFPALTPDPADRCGASVGRGRCAPLQVDARPHGPQYPHDGVDDREQWPTRFFNNSCLCAENFSGYDCGSCKPGWVGVNCNQRVLAVRRNILDLTAQERRRFIAALDLAKRTTHPHYVIASRRYAEIMGPDGNSTQFENVSIYNFFVWTHYYSIGKTFLGAGRESFGGIDFSHEGPAFVTWHRYHLLQLERDMQEMLQDPTFALPYWNFAIGGNECDICTDDFMGARSNFDSILLSSNSVFSQWRVLCESLEGYDTLGTICNSTEGGPIRRNPGGNVARPMVQRLPEPQDVALCLEVGLFDTPPFYSNSSESFRNTVEGYSEPSGKYDPSVRSLHNLAHLFLNGTGGQTHVSPNDPIFVLLHTFTDAVFDEWLRRHNADISLYPLENAPIGHNRQYNMVPFWPPVSNNEMFVTAPESLGYSYEVQWPSRALNFTEIITIAVVAALVLVAVIFAAASCAVHRSRKDDVHQPLLGEQYPRYSEEYERDASQSAV.

The N-terminal stretch at 1 to 23 (MLGPATFLPLTAALLLLIPGGRA) is a signal peptide. Residues 24 to 477 (QFPRQCVTPE…WPSRALNFTE (454 aa)) lie on the Lumenal, melanosome side of the membrane. 5 cysteine pairs are disulfide-bonded: C29/C40, C41/C65, C56/C99, C101/C110, and C113/C122. N96 and N104 each carry an N-linked (GlcNAc...) asparagine glycan. N-linked (GlcNAc...) asparagine glycosylation is found at N175 and N181. Positions 192, 215, and 224 each coordinate Zn(2+). 2 disulfides stabilise this stretch: C258-C261 and C290-C303. N304 and N350 each carry an N-linked (GlcNAc...) asparagine glycan. Zn(2+)-binding residues include H377 and H381. N-linked (GlcNAc...) asparagine glycosylation is present at N385. Residue H404 participates in Zn(2+) binding. Residues 478-501 (IITIAVVAALVLVAVIFAAASCAV) form a helical membrane-spanning segment. Topologically, residues 502 to 534 (HRSRKDDVHQPLLGEQYPRYSEEYERDASQSAV) are cytoplasmic.

Belongs to the tyrosinase family. It depends on Cu(2+) as a cofactor. The cofactor is Zn(2+).

The protein localises to the melanosome membrane. It catalyses the reaction 2 5,6-dihydroxyindole-2-carboxylate + O2 = 2 indole-5,6-quinone-2-carboxylate + 2 H2O. The protein operates within pigment biosynthesis; melanin biosynthesis. Its function is as follows. Plays a role in melanin biosynthesis. Catalyzes the oxidation of 5,6-dihydroxyindole-2-carboxylic acid (DHICA) into indole-5,6-quinone-2-carboxylic acid. May regulate or influence the type of melanin synthesized. Also to a lower extent, capable of hydroxylating tyrosine and producing melanin. The sequence is that of 5,6-dihydroxyindole-2-carboxylic acid oxidase (TYRP1) from Ambystoma mexicanum (Axolotl).